We begin with the raw amino-acid sequence, 308 residues long: Porphobilinogen deaminase (308 aa).

Residue cysteine 241 is modified to S-(dipyrrolylmethanemethyl)cysteine.

This sequence belongs to the HMBS family. In terms of assembly, monomer. The cofactor is dipyrromethane.

It catalyses the reaction 4 porphobilinogen + H2O = hydroxymethylbilane + 4 NH4(+). It participates in porphyrin-containing compound metabolism; protoporphyrin-IX biosynthesis; coproporphyrinogen-III from 5-aminolevulinate: step 2/4. In terms of biological role, tetrapolymerization of the monopyrrole PBG into the hydroxymethylbilane pre-uroporphyrinogen in several discrete steps. The sequence is that of Porphobilinogen deaminase from Staphylococcus aureus (strain Newman).